Reading from the N-terminus, the 374-residue chain is Putative serine/threonine-protein kinase ZK507.3 (374 aa).

Residues 25 to 296 (WKVIVELGKG…CKLTLKEPLV (272 aa)) form the Protein kinase domain. ATP is bound by residues 31–39 (LGKGGYGTV) and Lys-60. Residue Asp-158 is the Proton acceptor of the active site. The interval 302–374 (NDNESGSTPT…KTRNKKPSRK (73 aa)) is disordered. Over residues 306–324 (SGSTPTTSATACSPSSSTG) the composition is skewed to low complexity. The span at 334-343 (IASNIDQKSI) shows a compositional bias: polar residues. Residues 364 to 374 (TKTRNKKPSRK) show a composition bias toward basic residues.

It belongs to the protein kinase superfamily. Ser/Thr protein kinase family.

It catalyses the reaction L-seryl-[protein] + ATP = O-phospho-L-seryl-[protein] + ADP + H(+). The catalysed reaction is L-threonyl-[protein] + ATP = O-phospho-L-threonyl-[protein] + ADP + H(+). In Caenorhabditis elegans, this protein is Putative serine/threonine-protein kinase ZK507.3.